The sequence spans 76 residues: Probable small nuclear ribonucleoprotein G (76 aa).

In terms of domain architecture, Sm spans 4 to 76 (AHPPEVKKYM…IVMVEALDRV (73 aa)).

Belongs to the snRNP Sm proteins family. Interacts with the SMN complex. Core component of the spliceosomal U1, U2, U4 and U5 small nuclear ribonucleoproteins (snRNPs), the building blocks of the spliceosome. Most spliceosomal snRNPs contain a common set of Sm proteins, SNRPB, SNRPD1, SNRPD2, SNRPD3, SNRPE, SNRPF and SNRPG that assemble in a heptameric protein ring on the Sm site of the small nuclear RNA to form the core snRNP. Component of the U1 snRNP. Component of the U4/U6-U5 tri-snRNP complex. Component of the U7 snRNP complex. Component of the U11/U12 snRNPs that are part of the U12-type spliceosome.

The protein localises to the cytoplasm. The protein resides in the cytosol. Its subcellular location is the nucleus. Plays a role in pre-mRNA splicing as a core component of the spliceosomal U1, U2, U4 and U5 small nuclear ribonucleoproteins (snRNPs), the building blocks of the spliceosome. Component of both the pre-catalytic spliceosome B complex and activated spliceosome C complexes. Is also a component of the minor U12 spliceosome. The chain is Probable small nuclear ribonucleoprotein G from Drosophila melanogaster (Fruit fly).